Here is a 62-residue protein sequence, read N- to C-terminus: Metallothionein-like protein 3A (62 aa).

The protein belongs to the metallothionein superfamily. Type 15 family.

Functionally, metallothioneins have a high content of cysteine residues that bind various heavy metals. The chain is Metallothionein-like protein 3A (MT3A) from Oryza sativa subsp. indica (Rice).